The chain runs to 293 residues: Capsid protein (293 aa).

The span at 1 to 14 (MSESKAETPSKSAE) shows a compositional bias: basic and acidic residues. A disordered region spans residues 1 to 49 (MSESKAETPSKSAEKGVASLSTSAPPSSTTPTAQAKQTPPPVATTARPM). Over residues 18 to 37 (ASLSTSAPPSSTTPTAQAKQ) the composition is skewed to low complexity.

The protein belongs to the potexvirus capsid protein family. In terms of assembly, interacts with host NbANKr; this interaction targets the capsid protein to the host chloroplast.

Its subcellular location is the virion. It is found in the host chloroplast envelope. Required for genome encapsidation. Forms ribonucleoprotein complexes along with TGB1 helicase and viral RNA. The polypeptide is Capsid protein (ORF5) (Lolium latent virus (isolate Lolium/USA/US1/-) (LoLV)).